A 259-amino-acid chain; its full sequence is Ribosomal RNA small subunit methyltransferase A (259 aa).

S-adenosyl-L-methionine is bound by residues Asn-13, Leu-15, Gly-40, Glu-61, Asp-85, and Asn-103.

This sequence belongs to the class I-like SAM-binding methyltransferase superfamily. rRNA adenine N(6)-methyltransferase family. RsmA subfamily.

The protein localises to the cytoplasm. It catalyses the reaction adenosine(1518)/adenosine(1519) in 16S rRNA + 4 S-adenosyl-L-methionine = N(6)-dimethyladenosine(1518)/N(6)-dimethyladenosine(1519) in 16S rRNA + 4 S-adenosyl-L-homocysteine + 4 H(+). Specifically dimethylates two adjacent adenosines (A1518 and A1519) in the loop of a conserved hairpin near the 3'-end of 16S rRNA in the 30S particle. May play a critical role in biogenesis of 30S subunits. The polypeptide is Ribosomal RNA small subunit methyltransferase A (Neisseria gonorrhoeae (strain ATCC 700825 / FA 1090)).